A 984-amino-acid polypeptide reads, in one-letter code: MMEEDLYDEFGNYIGPENEEDEEELFPQAPSPTIAQVPSFEEVIPDEELEDVERAEEMALSHLEPQNAVVLHEDKQYYPSAEEVYGSNVDIMVQEQDTQPLSQPIIEPIRHKRIAIETTNVPDTVYKKEFLFGLLTGTDDVRSFIVAGHLHHGKSALLDLLVYYTHPDTKPPKRRSLRYTDTHYLERERVMSIKSTPLTLAVSDMKGKTFAFQCIDTPGHVDFVDEVAAPMAISDGVVLVVDVIEGVMINTTRIIKHAILHDMPIVLVLNKVDRLILELRLPPNDAYHKLRHVIDEVNDNICQISKDLKYRVSPELGNVCFASCDLGYCFTLSSFAKLYIDRHGGIDVDLFSKRLWGDIYFDSKTRKFAKQSLDGSGVRSFVHFILEPLYKLHTLTISDEAEKLKKHLSSFQIYLKPKDYLLDPKPLLQLICASFFGFPVGFVNAVTRHIPSPRENAARKASQSYIGPINSSIGKAILEMSREESAPLVMHVTKLYNTVDANNFYAFARVYSGQVKKGQKVKVLGENYSLEDEEDMVVAHIAEICVPCARYRLHVDGAVAGMLVLLGGVDNSISKTATIVSDNLKDDPYIFRPIAHMSESVFKVAVEPHNPSELPKLLDGLRKTNKSYPLSITKVEESGEHTIFGTGEMYMDCLLYDLRTLYSEIEIRVSDPVARFCETAVDTSSIKCFSDTPNKKNRITMVVEPLEKGISNDIENGKVNINWPQKRISEFFQKNYDWDLLASRSIWAFGPDDRGTNILRDDTLSTDVDKNVLNSVKEYIKQGFQWGTREGPLCDETIRNVNFRLMDVVLAPEQIYRGGGQIIPTARRVCYSSFLTASPRLMEPVYMVEVHAPADSLPIIYDLLTRRRGHVLQDIPRPGSPLYLVRALIPVIDSCGFETDLRVHTQGQAMCQMVFDHWQVVPGDPLDKSIKPKPLEPARGSDLARDFLIKTRRRKGLVEDVSTTRYFDQEMIDSLKEAGVVLSL.

Residues 1-28 (MMEEDLYDEFGNYIGPENEEDEEELFPQ) form a disordered region. In terms of domain architecture, tr-type G spans 139-402 (DDVRSFIVAG…HTLTISDEAE (264 aa)). The tract at residues 148 to 155 (GHLHHGKS) is G1. 148–155 (GHLHHGKS) provides a ligand contact to GTP. The segment at 190 to 194 (VMSIK) is G2. Residues 216 to 219 (DTPG) are G3. GTP-binding positions include 216–220 (DTPGH) and 270–273 (NKVD). The interval 270 to 273 (NKVD) is G4. The tract at residues 371 to 373 (QSL) is G5.

The protein belongs to the TRAFAC class translation factor GTPase superfamily. Classic translation factor GTPase family. EF-G/EF-2 subfamily. As to quaternary structure, belongs to the 40S cdc5-associated complex (or cwf complex), a spliceosome sub-complex reminiscent of a late-stage spliceosome composed of the U2, U5 and U6 snRNAs and at least brr2, cdc5, cwf2/prp3, cwf3/syf1, cwf4/syf3, cwf5/ecm2, spp42/cwf6, cwf7/spf27, cwf8, cwf9, cwf10, cwf11, cwf12, prp45/cwf13, cwf14, cwf15, cwf16, cwf17, cwf18, cwf19, cwf20, cwf21, cwf22, cwf23, cwf24, cwf25, cwf26, cyp7/cwf27, cwf28, cwf29/ist3, lea1, msl1, prp5/cwf1, prp10, prp12/sap130, prp17, prp22, sap61, sap62, sap114, sap145, slu7, smb1, smd1, smd3, smf1, smg1 and syf2.

It localises to the cytoplasm. Its subcellular location is the nucleus. Functionally, component of the U5 snRNP complex required for pre-mRNA splicing. Binds GTP. This chain is Pre-mRNA-splicing factor cwf10 (cwf10), found in Schizosaccharomyces pombe (strain 972 / ATCC 24843) (Fission yeast).